The sequence spans 66 residues: Large ribosomal subunit protein uL29 (66 aa).

This sequence belongs to the universal ribosomal protein uL29 family.

The protein is Large ribosomal subunit protein uL29 of Bartonella henselae (strain ATCC 49882 / DSM 28221 / CCUG 30454 / Houston 1) (Rochalimaea henselae).